A 289-amino-acid chain; its full sequence is mRNA-capping enzyme small subunit (289 aa).

In terms of assembly, heterodimer of a large and a small subunit.

The protein resides in the virion. The enzyme catalyses a 5'-end (5'-triphosphoguanosine)-ribonucleoside in mRNA + S-adenosyl-L-methionine = a 5'-end (N(7)-methyl 5'-triphosphoguanosine)-ribonucleoside in mRNA + S-adenosyl-L-homocysteine. Its function is as follows. Catalyzes the last reaction in the mRNA cap formation pathway. The sequence is that of mRNA-capping enzyme small subunit from Fowlpox virus (strain NVSL) (FPV).